A 332-amino-acid polypeptide reads, in one-letter code: Glycerol-3-phosphate dehydrogenase [NAD(P)+] (332 aa).

Residues serine 15, tryptophan 16, and lysine 110 each contribute to the NADPH site. Sn-glycerol 3-phosphate contacts are provided by lysine 110, glycine 137, and serine 139. Alanine 141 is an NADPH binding site. The sn-glycerol 3-phosphate site is built by lysine 192, aspartate 245, serine 255, arginine 256, and asparagine 257. Lysine 192 (proton acceptor) is an active-site residue. Arginine 256 is a binding site for NADPH. An NADPH-binding site is contributed by glutamate 282.

It belongs to the NAD-dependent glycerol-3-phosphate dehydrogenase family.

It localises to the cytoplasm. The catalysed reaction is sn-glycerol 3-phosphate + NAD(+) = dihydroxyacetone phosphate + NADH + H(+). It catalyses the reaction sn-glycerol 3-phosphate + NADP(+) = dihydroxyacetone phosphate + NADPH + H(+). Its pathway is membrane lipid metabolism; glycerophospholipid metabolism. Its function is as follows. Catalyzes the reduction of the glycolytic intermediate dihydroxyacetone phosphate (DHAP) to sn-glycerol 3-phosphate (G3P), the key precursor for phospholipid synthesis. The protein is Glycerol-3-phosphate dehydrogenase [NAD(P)+] of Coxiella burnetii (strain RSA 331 / Henzerling II).